We begin with the raw amino-acid sequence, 117 residues long: Large ribosomal subunit protein uL24 (117 aa).

The span at 1–12 shows a compositional bias: polar residues; the sequence is MSKKNSQTSPQR. Positions 1-20 are disordered; sequence MSKKNSQTSPQRQKMHVKKG.

Belongs to the universal ribosomal protein uL24 family. Part of the 50S ribosomal subunit.

One of two assembly initiator proteins, it binds directly to the 5'-end of the 23S rRNA, where it nucleates assembly of the 50S subunit. In terms of biological role, one of the proteins that surrounds the polypeptide exit tunnel on the outside of the subunit. The sequence is that of Large ribosomal subunit protein uL24 from Microcystis aeruginosa (strain NIES-843 / IAM M-2473).